A 181-amino-acid polypeptide reads, in one-letter code: MAVTNQMVAPRYAKALLEAAQDQNQVETVHEELQALQSVFNDNPTILTIFDNARITAADKDALMTTLTKDASPLVANLLKLTQQYGRFGALPAIISAFNQAYDEEAGIIAATVTTAVALSADQADALRSTIAARFGMKSTQLDQVVDPSVIGGVRIQARGSVIDGTVKHRFDKMKAALLAD.

It belongs to the ATPase delta chain family. In terms of assembly, F-type ATPases have 2 components, F(1) - the catalytic core - and F(0) - the membrane proton channel. F(1) has five subunits: alpha(3), beta(3), gamma(1), delta(1), epsilon(1). F(0) has three main subunits: a(1), b(2) and c(10-14). The alpha and beta chains form an alternating ring which encloses part of the gamma chain. F(1) is attached to F(0) by a central stalk formed by the gamma and epsilon chains, while a peripheral stalk is formed by the delta and b chains.

It is found in the cell membrane. Its function is as follows. F(1)F(0) ATP synthase produces ATP from ADP in the presence of a proton or sodium gradient. F-type ATPases consist of two structural domains, F(1) containing the extramembraneous catalytic core and F(0) containing the membrane proton channel, linked together by a central stalk and a peripheral stalk. During catalysis, ATP synthesis in the catalytic domain of F(1) is coupled via a rotary mechanism of the central stalk subunits to proton translocation. This protein is part of the stalk that links CF(0) to CF(1). It either transmits conformational changes from CF(0) to CF(1) or is implicated in proton conduction. The sequence is that of ATP synthase subunit delta from Lacticaseibacillus paracasei (strain ATCC 334 / BCRC 17002 / CCUG 31169 / CIP 107868 / KCTC 3260 / NRRL B-441) (Lactobacillus paracasei).